The sequence spans 705 residues: Ribosomal RNA large subunit methyltransferase K/L (705 aa).

Residues 43 to 154 (VVYRCCLWSR…GEKGILGFDL (112 aa)) form the THUMP domain.

The protein belongs to the methyltransferase superfamily. RlmKL family.

Its subcellular location is the cytoplasm. The catalysed reaction is guanosine(2445) in 23S rRNA + S-adenosyl-L-methionine = N(2)-methylguanosine(2445) in 23S rRNA + S-adenosyl-L-homocysteine + H(+). The enzyme catalyses guanosine(2069) in 23S rRNA + S-adenosyl-L-methionine = N(2)-methylguanosine(2069) in 23S rRNA + S-adenosyl-L-homocysteine + H(+). In terms of biological role, specifically methylates the guanine in position 2445 (m2G2445) and the guanine in position 2069 (m7G2069) of 23S rRNA. The chain is Ribosomal RNA large subunit methyltransferase K/L from Aliivibrio fischeri (strain MJ11) (Vibrio fischeri).